Reading from the N-terminus, the 266-residue chain is Glucosamine-6-phosphate deaminase (266 aa).

Asp72 functions as the Proton acceptor; for enolization step in the catalytic mechanism. Residue Asp141 is the For ring-opening step of the active site. His143 (proton acceptor; for ring-opening step) is an active-site residue. Glu148 acts as the For ring-opening step in catalysis.

Belongs to the glucosamine/galactosamine-6-phosphate isomerase family. NagB subfamily. As to quaternary structure, homohexamer.

The enzyme catalyses alpha-D-glucosamine 6-phosphate + H2O = beta-D-fructose 6-phosphate + NH4(+). Its pathway is amino-sugar metabolism; N-acetylneuraminate degradation; D-fructose 6-phosphate from N-acetylneuraminate: step 5/5. With respect to regulation, allosterically activated by N-acetylglucosamine 6-phosphate (GlcNAc6P). Catalyzes the reversible isomerization-deamination of glucosamine 6-phosphate (GlcN6P) to form fructose 6-phosphate (Fru6P) and ammonium ion. This chain is Glucosamine-6-phosphate deaminase, found in Vibrio cholerae serotype O1 (strain ATCC 39541 / Classical Ogawa 395 / O395).